The chain runs to 67 residues: Conotoxin Cp1.1 (67 aa).

The N-terminal stretch at 1–26 is a signal peptide; that stretch reads MMFRLTSVSCFLLVIACLNLFQVVLT. Intrachain disulfides connect Cys29–Cys43, Cys36–Cys48, Cys42–Cys52, and Cys47–Cys56. Residue Tyr60 is modified to Tyrosine amide. The propeptide occupies 64–67; the sequence is ATFQ.

This sequence belongs to the conotoxin I2 superfamily. In terms of tissue distribution, expressed by the venom duct.

Its subcellular location is the secreted. In Conus capitaneus (Captain cone), this protein is Conotoxin Cp1.1.